Consider the following 95-residue polypeptide: Defensin-like protein 232 (95 aa).

An N-terminal signal peptide occupies residues 1-26 (MRCTTLIMVSFVVSCLLLSLVEESEA). 4 cysteine pairs are disulfide-bonded: C33–C94, C43–C68, C51–C84, and C66–C86.

Belongs to the DEFL family. As to expression, flower buds.

Its subcellular location is the secreted. This Arabidopsis thaliana (Mouse-ear cress) protein is Defensin-like protein 232 (SCRL23).